We begin with the raw amino-acid sequence, 819 residues long: MSSLDEDEEDFEMLDTENLQFMGKKMFGKQAGEDESDDFAIGGSTPTNKLKFYPYSNNKLTRSTGTLNLSLSNTALSEANSKFLGKIEEEEEEEEEGKDEESVDSRIKRWSPFHENESVTTPITKRSAEKTNSPISLKQWNQRWFPKNDARTENTSSSSSYSVAKPNQSAFTSSGLVSKMSMDTSLYPAKLRIPETPVKKSPLVEGRDHKHVHLSSSKNASSSLSVSPLNFVEDNNLQEDLLFSDSPSSKALPSIHVPTIDSSPLSEAKYHAHDRHNNQTNILSPTNSLVTNSSPQTLHSNKFKKIKRARNSVILKNRELTNSLQQFKDDLYGTDENFPPPIIISSHHSTRKNPQPYQFRGRYDNDTDEEISTPTRRKSIIGATSQTHRESRPLSLSSAIVTNTTSAETHSISSTDSSPLNSKRRLISSNKLSANPDSHLFEKFTNVHSIGKGQFSTVYQVTFAQTNKKYAIKAIKPNKYNSLKRILLEIKILNEVTNQITMDQEGKEYIIDYISSWKFQNSYYIMTELCENGNLDGFLQEQVIAKKKRLEDWRIWKIIVELSLALRFIHDSCHIVHLDLKPANVMITFEGNLKLGDFGMATHLPLEDKSFENEGDREYIAPEIISDCTYDYKADIFSLGLMIVEIAANVVLPDNGNAWHKLRSGDLSDAGRLSSTDIHSESLFSDITKVDTNDLFDFERDNISGNSNNAGTSTVHNNSNINNPNMNNGNDNNNVNTAATKNRLILHKSSKIPAWVPKFLIDGESLERIVRWMIEPNYERRPTANQILQTEECLYVEMTRNAGAIIQEDDFGPKPKFFI.

S36 carries the phosphoserine; by CDC5 modification. T45 bears the Phosphothreonine; by CDC28 mark. S56 and S63 each carry phosphoserine; by CDC28. Residue S70 is modified to Phosphoserine. The residue at position 74 (T74) is a Phosphothreonine; by CDC28. A disordered region spans residues K86–S105. The segment covering E88–S102 has biased composition (acidic residues). A Phosphoserine; by CDC5 modification is found at S102. S105 carries the post-translational modification Phosphoserine; by CDC28. S111 is subject to Phosphoserine; by CDC5, CDC28 and CLA4. Positions E117 to Q168 are disordered. S118 bears the Phosphoserine; by CDC5 mark. The segment covering S118–Q142 has biased composition (polar residues). Phosphothreonine; by CDC28 is present on residues T121 and T124. A Phosphoserine; by CDC28 modification is found at S127. Phosphothreonine; by CDC5 is present on T131. Residue S133 is modified to Phosphoserine; by CDC28. S136 is subject to Phosphoserine; by CDC28 and CLA4. 2 positions are modified to phosphoserine; by CDC5: S156 and S169. Position 196 is a phosphothreonine; by CDC28 (T196). At S201 the chain carries Phosphoserine; by CDC28. A phosphoserine; by CDC5 mark is found at S225 and S254. A Phosphoserine modification is found at S262. A phosphoserine; by CDC28 mark is found at S263 and S266. Residues N278–T297 form a disordered region. The residue at position 280 (T280) is a Phosphothreonine; by CDC5. Residues S284 and S294 each carry the phosphoserine modification. S312 carries the phosphoserine; by CLA4 modification. The interval P341–S395 is disordered. S345 bears the Phosphoserine mark. Phosphothreonine; by CDC28 is present on residues T367 and T373. S379 carries the post-translational modification Phosphoserine; by CDC5 and CLA4. T384 carries the phosphothreonine; by CDC28 modification. S395 and S438 each carry phosphoserine; by CDC5 and CLA4. The 351-residue stretch at F444 to L794 folds into the Protein kinase domain. ATP contacts are provided by residues I450 to V458 and K473. D579 serves as the catalytic Proton acceptor. N584 and D597 together coordinate Mg(2+). At S610 the chain carries Phosphoserine; by CDC5. A Phosphothreonine; by CDC5 modification is found at T629. Position 688 is a phosphothreonine; by CDC5 and CLA4 (T688). A Phosphothreonine modification is found at T692. Over residues S707–H716 the composition is skewed to polar residues. The segment at S707–N736 is disordered. Over residues N717 to N736 the composition is skewed to low complexity. K741 participates in a covalent cross-link: Glycyl lysine isopeptide (Lys-Gly) (interchain with G-Cter in ubiquitin).

It belongs to the protein kinase superfamily. Ser/Thr protein kinase family. WEE1 subfamily. In terms of assembly, interacts with CLB2-CDC28. Partial hyperphosphorylation of SWE1 by CLB2-CDC28 stabilizes the ternary complex of SWE1 and CLB2-CDC28 and stimulates kinase activity of SWE1 in a positive feedback loop, maintaining CLB2-CDC28 in the tyrosine-phosphorylated state. Fully hyperphosphorylated SWE1 dissociates from CLB2-CDC28. Interacts with HSL7, KCC4 and MET30. Post-translationally, ubiquitinated by the SCF(MET30) complex, leading to its degradation by the proteasome. In terms of processing, phosphorylated progressively by CLA4, CLB2-CDC28 and CDC5. CLA4-dependent phosphorylation occurs in late S phase, followed by phosphorylation by CLB2-CDC28 in early G2, when the levels of mitotic CLB2 increases. This phosphorylation is critical for triggering subsequent SWE1-CDC5 interaction and CDC5-dependent phosphorylation. The resulting cumulative hyperphosphorylation down-regulates SWE1 by targeting it for ubiquitin-mediated degradation. This stepwise phosphorylation is thought to be a mechanism to integrate the different checkpoint requirements before entry into mitosis.

It is found in the bud neck. The protein localises to the nucleus. The enzyme catalyses L-seryl-[protein] + ATP = O-phospho-L-seryl-[protein] + ADP + H(+). The catalysed reaction is L-threonyl-[protein] + ATP = O-phospho-L-threonyl-[protein] + ADP + H(+). Functionally, protein kinase that acts as a negative regulator of entry into mitosis (G2 to M transition) by phosphorylating and inhibiting the mitosis-promoting cyclin B-bound CDC28 at 'Tyr-19'. SWE1-mediated inhibition of CDC28 acts in a cell size or morphogenesis checkpoint to delay mitosis in response to defects in growth, actin organization or bud formation. Inhibits the activity of B-type cyclins in replication initiation strongly for CLB2, moderately for CLB3 and CLB4, and there is no apparent inhibition for CLB5 and CLB6, correlating with the normal expression timing of those cyclins. Hyperphosphorylation and degradation of SWE1 when all checkpoint requirement are met releases CLB2-CDC28 from inhibition and allows for progression through the cell cycle. SWE1-dependent CDC28 phosphorylation is also required for pachytene arrest upon activation of the recombination checkpoint during meiosis. Also involved in the regulation of nitrogen starvation- and short chain alcohol-induced filamentous growth, or filamentous differentiation in response to slowed DNA synthesis. Can act both on serines and on tyrosines. The protein is Mitosis inhibitor protein kinase SWE1 (SWE1) of Saccharomyces cerevisiae (strain ATCC 204508 / S288c) (Baker's yeast).